Reading from the N-terminus, the 232-residue chain is MIIEKKIKNYTVFVKKDGEKYIEIFKDFLSYNHQVIKVFRNIEDTKVVLINTDYGKYILKVFSPKVKNTERFFKSLVKGDYYEKLFHQTDRVRREGFAALNDFYLLAEIKTLRYVKTYVMIIEYIEGIELVDMPEISDEVRGKIKQSIYSLHQHGMVSGDPHKGNFILQGNEIRIIDLSGKRPSRQRKAKDRIDLERHYGIKNNVRDIGFYLLIYKKKLRNFLRRIKGKEKR.

The protein belongs to the protein kinase superfamily. RfaY/WaaY family.

The catalysed reaction is alpha-D-Glc-(1-&gt;3)-[L-alpha-D-Hep-(1-&gt;7)]-L-alpha-D-Hep-(1-&gt;3)-4-O-PO3(2-)-L-alpha-D-Hep-(1-&gt;5)-[alpha-Kdo-(2-&gt;4)]-alpha-Kdo-(2-&gt;6)-lipid A + ATP = alpha-D-Glc-(1-&gt;3)-[L-alpha-D-Hep-(1-&gt;7)]-4-O-PO3(2-)-L-alpha-D-Hep-(1-&gt;3)-4-O-PO3(2-)-L-alpha-D-Hep-(1-&gt;5)-[alpha-Kdo-(2-&gt;4)]-alpha-Kdo-(2-&gt;6)-lipid A + ADP + H(+). It functions in the pathway bacterial outer membrane biogenesis; LPS core biosynthesis. Kinase involved in the biosynthesis of the core oligosaccharide region of lipopolysaccharide (LPS). Catalyzes the phosphorylation of the second heptose unit (HepII) of the inner core. The polypeptide is Lipopolysaccharide core heptose(II) kinase WaaY (Salmonella typhimurium (strain LT2 / SGSC1412 / ATCC 700720)).